The chain runs to 259 residues: Sphinganine C4-monooxygenase 2 (259 aa).

A run of 3 helical transmembrane segments spans residues F10–L30, A54–F74, and I91–F111. The Fatty acid hydroxylase domain maps to F98–T234. The short motif at H113–H117 is the Histidine box-1 element. The Histidine box-2 signature appears at H127–H131. The Histidine box-3 motif lies at Y206–Q212.

The protein belongs to the sterol desaturase family. Requires Fe cation as cofactor. In terms of tissue distribution, ubiquitous, with higher levels in flowers and roots.

Its subcellular location is the endoplasmic reticulum membrane. It carries out the reaction a dihydroceramide + 2 Fe(II)-[cytochrome b5] + O2 + 2 H(+) = a phytoceramide + 2 Fe(III)-[cytochrome b5] + H2O. It functions in the pathway membrane lipid metabolism; sphingolipid biosynthesis. Functionally, involved in sphingolipid trihydroxy long-chain base (4-hydroxysphinganine) biosynthesis. Can use C18- and C20-sphinganine as substrates to produce C18- and C20-phytosphinganines (D-ribo-2-amino-1,3,4-trihydroxyoctadecane and -eicosane). This chain is Sphinganine C4-monooxygenase 2 (SBH2), found in Arabidopsis thaliana (Mouse-ear cress).